We begin with the raw amino-acid sequence, 800 residues long: DNA topoisomerase 1 (800 aa).

Residues 1–111 form the Toprim domain; that stretch reads MKLVIVESPA…VKSDDFFKRV (111 aa). The Mg(2+) site is built by Glu7 and Asp80. Positions 132-568 constitute a Topo IA-type catalytic domain; sequence DNNLVNAQQA…FWNGFNHNIE (437 aa). Residues 166 to 171 form an interaction with DNA region; the sequence is SAGRVQ. Catalysis depends on Tyr304, which acts as the O-(5'-phospho-DNA)-tyrosine intermediate. The C4-type zinc finger occupies 600-627; sequence CPSCKTGELSLKLGKFGAFLACSNYPEC.

It belongs to the type IA topoisomerase family. In terms of assembly, monomer. Mg(2+) is required as a cofactor.

It carries out the reaction ATP-independent breakage of single-stranded DNA, followed by passage and rejoining.. Its function is as follows. Releases the supercoiling and torsional tension of DNA, which is introduced during the DNA replication and transcription, by transiently cleaving and rejoining one strand of the DNA duplex. Introduces a single-strand break via transesterification at a target site in duplex DNA. The scissile phosphodiester is attacked by the catalytic tyrosine of the enzyme, resulting in the formation of a DNA-(5'-phosphotyrosyl)-enzyme intermediate and the expulsion of a 3'-OH DNA strand. The free DNA strand then undergoes passage around the unbroken strand, thus removing DNA supercoils. Finally, in the religation step, the DNA 3'-OH attacks the covalent intermediate to expel the active-site tyrosine and restore the DNA phosphodiester backbone. This Rickettsia bellii (strain RML369-C) protein is DNA topoisomerase 1.